The primary structure comprises 116 residues: MAAVLTFRRLLTLPRAARGFGVQVSPSGEKITHTGQVYDEKDYRRVRFVDRQKEVNENFAIDLIAQQPVNEVEHRIIACDGGGGALGHPKVYINLDKETKTGTCGYCGLQFKQHHH.

The transit peptide at 1 to 20 (MAAVLTFRRLLTLPRAARGF) directs the protein to the mitochondrion. N6-acetyllysine occurs at positions 90 and 112.

The protein belongs to the complex I NDUFS6 subunit family. Mammalian complex I is composed of 45 different subunits. This is a component of the iron-sulfur (IP) fragment of the enzyme.

It localises to the mitochondrion inner membrane. Accessory subunit of the mitochondrial membrane respiratory chain NADH dehydrogenase (Complex I), that is believed not to be involved in catalysis. Complex I functions in the transfer of electrons from NADH to the respiratory chain. The immediate electron acceptor for the enzyme is believed to be ubiquinone. The polypeptide is NADH dehydrogenase [ubiquinone] iron-sulfur protein 6, mitochondrial (Ndufs6) (Mus musculus (Mouse)).